Here is a 340-residue protein sequence, read N- to C-terminus: Ketol-acid reductoisomerase (NADP(+)) (340 aa).

Residues 2–181 (VKMYYEADVK…GCTKAGVIET (180 aa)) form the KARI N-terminal Rossmann domain. NADP(+) is bound by residues 25 to 28 (YGSQ), R48, S52, and 82 to 85 (DERQ). H107 is a catalytic residue. Residue G133 participates in NADP(+) binding. Residues 182–327 (SFREETETDL…EQLRGMMSWI (146 aa)) enclose the KARI C-terminal knotted domain. Mg(2+) is bound by residues D190, E194, E226, and E230. S251 is a binding site for substrate.

Belongs to the ketol-acid reductoisomerase family. The cofactor is Mg(2+).

The enzyme catalyses (2R)-2,3-dihydroxy-3-methylbutanoate + NADP(+) = (2S)-2-acetolactate + NADPH + H(+). It carries out the reaction (2R,3R)-2,3-dihydroxy-3-methylpentanoate + NADP(+) = (S)-2-ethyl-2-hydroxy-3-oxobutanoate + NADPH + H(+). Its pathway is amino-acid biosynthesis; L-isoleucine biosynthesis; L-isoleucine from 2-oxobutanoate: step 2/4. It participates in amino-acid biosynthesis; L-valine biosynthesis; L-valine from pyruvate: step 2/4. Involved in the biosynthesis of branched-chain amino acids (BCAA). Catalyzes an alkyl-migration followed by a ketol-acid reduction of (S)-2-acetolactate (S2AL) to yield (R)-2,3-dihydroxy-isovalerate. In the isomerase reaction, S2AL is rearranged via a Mg-dependent methyl migration to produce 3-hydroxy-3-methyl-2-ketobutyrate (HMKB). In the reductase reaction, this 2-ketoacid undergoes a metal-dependent reduction by NADPH to yield (R)-2,3-dihydroxy-isovalerate. This is Ketol-acid reductoisomerase (NADP(+)) from Brevibacillus brevis (strain 47 / JCM 6285 / NBRC 100599).